The primary structure comprises 375 residues: Peptidyl-prolyl cis-trans isomerase D (375 aa).

In terms of domain architecture, PPIase cyclophilin-type spans 7–169 (YFDITIANEP…QAVTISSAGV (163 aa)). TPR repeat units lie at residues 217–250 (AGKL…LDVH), 270–307 (LPLL…PNLS), and 312–345 (GKAL…VPGD).

The protein belongs to the cyclophilin-type PPIase family. PPIase D subfamily.

The protein localises to the cytoplasm. The catalysed reaction is [protein]-peptidylproline (omega=180) = [protein]-peptidylproline (omega=0). In terms of biological role, PPIases accelerate the folding of proteins. It catalyzes the cis-trans isomerization of proline imidic peptide bonds in oligopeptides. The sequence is that of Peptidyl-prolyl cis-trans isomerase D (CPR6) from Cryptococcus neoformans var. neoformans serotype D (strain JEC21 / ATCC MYA-565) (Filobasidiella neoformans).